Reading from the N-terminus, the 61-residue chain is uncharacterized protein (61 aa).

The tract at residues 1–40 (MRRGGEPQCDGREFRIASSPAREREDDNETAPPQTSAAQE) is disordered. The span at 9-25 (CDGREFRIASSPARERE) shows a compositional bias: basic and acidic residues.

This is an uncharacterized protein from Caenorhabditis elegans.